The primary structure comprises 58 residues: Large ribosomal subunit protein eL24 (58 aa).

The Zn(2+) site is built by cysteine 6, cysteine 9, cysteine 32, and cysteine 36. The C4-type zinc-finger motif lies at 6-36 (CAFCGADILPGYGIMYVKTDGTTLRFCSRKC).

The protein belongs to the eukaryotic ribosomal protein eL24 family. As to quaternary structure, part of the 50S ribosomal subunit. Forms a cluster with proteins L3 and L14. Zn(2+) serves as cofactor.

Binds to the 23S rRNA. This chain is Large ribosomal subunit protein eL24, found in Pyrobaculum islandicum (strain DSM 4184 / JCM 9189 / GEO3).